A 100-amino-acid polypeptide reads, in one-letter code: UPF0125 protein HD_1828 (100 aa).

This sequence belongs to the UPF0125 (RnfH) family.

The sequence is that of UPF0125 protein HD_1828 from Haemophilus ducreyi (strain 35000HP / ATCC 700724).